The chain runs to 228 residues: Non-specific lipid-transfer protein EPAD1 (228 aa).

An N-terminal signal peptide occupies residues 1–24 (MERSHLAVLLGLLAFAAGVPAAAA). Cystine bridges form between cysteine 40/cysteine 62, cysteine 63/cysteine 105, and cysteine 78/cysteine 119. Asparagine 94 carries an N-linked (GlcNAc...) asparagine glycan. The interval 124 to 207 (PPASIVTAPP…PPRSGASSSL (84 aa)) is disordered. Positions 145–162 (REAPPPPPAAEKLSPPPQ) are enriched in pro residues.

The protein belongs to the plant LTP family. As to expression, expressed in young panicles. Specifically expressed in pollen mother cells and young microspores.

It localises to the cell membrane. In terms of biological role, plant non-specific lipid-transfer protein that binds phospholipids in vitro. Required for correct pollen exine patterning by controlling the continuity and homogeneity of the primexine distribution. The chain is Non-specific lipid-transfer protein EPAD1 from Oryza sativa subsp. japonica (Rice).